The chain runs to 453 residues: AP-4 complex subunit mu-1 (453 aa).

An MHD domain is found at lysine 184–arginine 452.

The protein belongs to the adaptor complexes medium subunit family. In terms of assembly, adaptor protein complex 4 (AP-4) is a heterotetramer composed of two large adaptins (epsilon-type subunit AP4E1 and beta-type subunit AP4B1), a medium adaptin (mu-type subunit AP4M1) and a small adaptin (sigma-type AP4S1). Interacts with tyrosine-based sorting signals on the cytoplasmic tail of cargo proteins such as APP, ATG9A, LAMP2 and NAGPA. Interacts with the C-terminal domain of GRID2. Interacts with GRIA1 and GRIA2; the interaction is indirect via CACNG3. Interacts with CACNG3; CACNG3 associates GRIA1 and GRIA2 with the adaptor protein complex 4 (AP-4) to target them to the somatodendritic compartment of neurons. Interacts with HOOK1 and HOOK2; the interactions are direct, mediate the interaction between FTS-Hook-FHIP (FHF) complex and AP-4 and the perinuclear distribution of AP-4. In terms of tissue distribution, ubiquitous. Highly expressed in testis and lowly expressed in brain and lung.

The protein resides in the golgi apparatus. It localises to the trans-Golgi network membrane. It is found in the early endosome. Its function is as follows. Component of the adaptor protein complex 4 (AP-4). Adaptor protein complexes are vesicle coat components involved both in vesicle formation and cargo selection. They control the vesicular transport of proteins in different trafficking pathways. AP-4 forms a non clathrin-associated coat on vesicles departing the trans-Golgi network (TGN) and may be involved in the targeting of proteins from the trans-Golgi network (TGN) to the endosomal-lysosomal system. It is also involved in protein sorting to the basolateral membrane in epithelial cells and the proper asymmetric localization of somatodendritic proteins in neurons. Within AP-4, the mu-type subunit AP4M1 is directly involved in the recognition and binding of tyrosine-based sorting signals found in the cytoplasmic part of cargos. The adaptor protein complex 4 (AP-4) may also recognize other types of sorting signal. In Homo sapiens (Human), this protein is AP-4 complex subunit mu-1.